The primary structure comprises 553 residues: Copine-9 (553 aa).

C2 domains follow at residues Met-1–Leu-125 and Lys-132–Tyr-255. Ca(2+)-binding residues include Asp-163, Asp-169, Asp-225, Asp-227, and Asp-233. The VWFA domain occupies Asn-299–Val-500. Residues Thr-531–Pro-553 form a disordered region. Residues Pro-536–Pro-553 are compositionally biased toward pro residues.

It belongs to the copine family. The cofactor is Ca(2+).

In terms of biological role, probable calcium-dependent phospholipid-binding protein that may play a role in calcium-mediated intracellular processes. Plays a role in dendrite formation by melanocytes. In Mus musculus (Mouse), this protein is Copine-9.